Here is a 236-residue protein sequence, read N- to C-terminus: Cyclin-P3-1 (236 aa).

It belongs to the cyclin family. Cyclin U/P subfamily.

In Oryza sativa subsp. japonica (Rice), this protein is Cyclin-P3-1 (CYCP3-1).